A 190-amino-acid chain; its full sequence is Translation initiation factor IF-3 (190 aa).

It belongs to the IF-3 family. As to quaternary structure, monomer.

Its subcellular location is the cytoplasm. IF-3 binds to the 30S ribosomal subunit and shifts the equilibrium between 70S ribosomes and their 50S and 30S subunits in favor of the free subunits, thus enhancing the availability of 30S subunits on which protein synthesis initiation begins. This Prochlorococcus marinus (strain MIT 9301) protein is Translation initiation factor IF-3.